Here is a 208-residue protein sequence, read N- to C-terminus: Ras-related protein Rab-6A (208 aa).

Serine 2 carries the post-translational modification N-acetylserine. Serine 23, valine 24, glycine 25, lysine 26, threonine 27, serine 28, aspartate 39, asparagine 40, tyrosine 42, and threonine 45 together coordinate GTP. Position 27 (threonine 27) interacts with Mg(2+). Residues 32 to 50 (RFMYDSFDNTYQATIGIDF) carry the Switch 1 motif. Threonine 45 and aspartate 68 together coordinate Mg(2+). Residues 69–88 (TAGQERFRSLIPSYIRDSAA) carry the Switch 2 motif. 7 residues coordinate GTP: glycine 71, asparagine 126, lysine 127, aspartate 129, serine 156, alanine 157, and lysine 158. Residues cysteine 206 and cysteine 208 are each lipidated (S-geranylgeranyl cysteine). Cysteine 208 carries the post-translational modification Cysteine methyl ester.

It belongs to the small GTPase superfamily. Rab family. The cofactor is Mg(2+).

The protein localises to the golgi apparatus membrane. The enzyme catalyses GTP + H2O = GDP + phosphate + H(+). Its activity is regulated as follows. Regulated by guanine nucleotide exchange factors (GEFs) which promote the exchange of bound GDP for free GTP. Regulated by GTPase activating proteins (GAPs) which increase the GTP hydrolysis activity. Inhibited by GDP dissociation inhibitors (GDIs). Functionally, the small GTPases Rab are key regulators of intracellular membrane trafficking, from the formation of transport vesicles to their fusion with membranes. Rabs cycle between an inactive GDP-bound form and an active GTP-bound form that is able to recruit to membranes different sets of downstream effectors directly responsible for vesicle formation, movement, tethering and fusion. RAB6A acts as a regulator of COPI-independent retrograde transport from the Golgi apparatus towards the endoplasmic reticulum (ER). This chain is Ras-related protein Rab-6A (RAB6A), found in Gallus gallus (Chicken).